A 187-amino-acid chain; its full sequence is 5-hmdU DNA kinase (187 aa).

This sequence belongs to the thymidylate kinase family. 5-hmdU DNA kinase subfamily.

The catalysed reaction is 5-hydroxymethyl-dUMP in DNA + ATP = 5-phosphomethyl-dUMP in DNA + ADP + H(+). Phosphorylates 5-hydroxymethyluracil (5hmdU) into 5-phosphomethyl-2'-deoxyuridine (5-PmdU) on DNA as a step in the pathway leading to thymidine hypermodifications in the viral genome. The phosphate is added internally to the DNA polymer. Also transfers glutamate to 5-pyrophosphoryloxymethyldeoxyuridine (5-PPmdU) to produce 5-Nalpha-glyutamylthymidine (Nalpha-GluT). As a final result of the pathway of hypermodification, 5-aminoethyl-2'-deoxyuridine (5-NedU) substitutes for about 30% of thymidines in the viral DNA. These modifications probably prevent degradation of viral genome by the host restriction-modification antiviral defense system. The polypeptide is 5-hmdU DNA kinase (Pseudomonas phage M6).